The sequence spans 167 residues: Ion-translocating oxidoreductase complex subunit B (167 aa).

A hydrophobic region spans residues 1 to 22 (MITLIIFSFLSFLLGIILSFTA). The 4Fe-4S domain occupies 28–87 (QEDPIVEIVNELLPQSQCAQCGYSGCYPYAKAIVENSEKINKCIPGGTDLISAISSVLSI). Residues C45, C48, C53, C70, C113, C116, C119, C123, C143, C146, C149, and C153 each contribute to the [4Fe-4S] cluster site. 4Fe-4S ferredoxin-type domains lie at 104–133 (NTVL…GAPN) and 134–163 (FIHT…IKKE).

Belongs to the 4Fe4S bacterial-type ferredoxin family. RnfB subfamily. The complex is composed of six subunits: RnfA, RnfB, RnfC, RnfD, RnfE and RnfG. Requires [4Fe-4S] cluster as cofactor.

The protein localises to the cell inner membrane. Its function is as follows. Part of a membrane-bound complex that couples electron transfer with translocation of ions across the membrane. This Buchnera aphidicola subsp. Acyrthosiphon pisum (strain Tuc7) protein is Ion-translocating oxidoreductase complex subunit B.